The sequence spans 343 residues: Heme A synthase (343 aa).

The next 8 helical transmembrane spans lie at 13 to 33 (VALW…VGGA), 96 to 116 (HRLL…FFLI), 130 to 150 (VLLG…SSGL), 165 to 185 (LGLA…AWAG), 197 to 217 (GWAL…ALVA), 258 to 278 (LHHR…GVAA), 290 to 310 (LTAF…IWTL), and 311 to 331 (MTAV…ILLA). His260 is a binding site for heme. His322 contributes to the heme binding site.

Belongs to the COX15/CtaA family. Type 2 subfamily. In terms of assembly, interacts with CtaB. Heme b serves as cofactor.

It is found in the cell membrane. The catalysed reaction is Fe(II)-heme o + 2 A + H2O = Fe(II)-heme a + 2 AH2. It participates in porphyrin-containing compound metabolism; heme A biosynthesis; heme A from heme O: step 1/1. Catalyzes the conversion of heme O to heme A by two successive hydroxylations of the methyl group at C8. The first hydroxylation forms heme I, the second hydroxylation results in an unstable dihydroxymethyl group, which spontaneously dehydrates, resulting in the formyl group of heme A. This is Heme A synthase from Caulobacter sp. (strain K31).